The chain runs to 297 residues: Taste receptor type 2 member 4 (297 aa).

The Extracellular segment spans residues 1-11 (MLWELYVFVFA). The chain crosses the membrane as a helical span at residues 12–32 (ASVFLNFVGIIANLFIIVIII). The Cytoplasmic segment spans residues 33 to 46 (KTWVNSRRIASPDR). Residues 47-67 (ILFSLAITRFLTLGLFLLNSV) traverse the membrane as a helical segment. Over 68–80 (YIATNTGRSVYFS) the chain is Extracellular. The helical transmembrane segment at 81–101 (TFFLLCWKFLDANSLWLVTIL) threads the bilayer. At 102-128 (NSLYCVKITNFQHPVFLLLKRTISMKT) the chain is on the cytoplasmic side. A helical membrane pass occupies residues 129 to 149 (TSLLLACLLISALTTLLYYML). Residues 150–171 (SQISRFPEHIIGRNDTSFDLSD) are Extracellular-facing. The N-linked (GlcNAc...) asparagine glycan is linked to asparagine 163. A helical membrane pass occupies residues 172-192 (GILTLVASLVLNSLLQFMLNV). The Cytoplasmic segment spans residues 193-229 (TFASLLIHSLRRHIQKMQRNRTSFWNPQTEAHMGAMR). The helical transmembrane segment at 230–250 (LMICFLVLYIPYSIATLLYLP) threads the bilayer. Topologically, residues 251–260 (SYMRKNLRAQ) are extracellular. A helical transmembrane segment spans residues 261-281 (AICMIITAAYPPGHSVLLIIT). The Cytoplasmic portion of the chain corresponds to 282-297 (HHKLKAKAKKIFCFYK).

Belongs to the G-protein coupled receptor T2R family. In terms of tissue distribution, expressed in subsets of taste receptor cells of the tongue and palate epithelium and exclusively in gustducin-positive cells. Expressed in 15% taste bud cells in circumvallate and foliate papillae but only in 2% in fungiform papillae.

It is found in the membrane. The protein localises to the cell projection. The protein resides in the cilium membrane. Gustducin-coupled receptor for denatonium and N(6)-propyl-2-thiouracil implicated in the perception of bitter compounds in the oral cavity and the gastrointestinal tract. Signals through PLCB2 and the calcium-regulated cation channel TRPM5. In airway epithelial cells, binding of denatonium increases the intracellular calcium ion concentration and stimulates ciliary beat frequency. The chain is Taste receptor type 2 member 4 (Tas2r4) from Mus musculus (Mouse).